We begin with the raw amino-acid sequence, 132 residues long: Small ribosomal subunit protein uS8 (132 aa).

The protein belongs to the universal ribosomal protein uS8 family. In terms of assembly, part of the 30S ribosomal subunit. Contacts proteins S5 and S12.

One of the primary rRNA binding proteins, it binds directly to 16S rRNA central domain where it helps coordinate assembly of the platform of the 30S subunit. This Clostridium botulinum (strain Alaska E43 / Type E3) protein is Small ribosomal subunit protein uS8.